We begin with the raw amino-acid sequence, 157 residues long: Protein MGF 110-13L (157 aa).

The next 2 helical transmembrane spans lie at 14 to 34 and 39 to 59; these read QYCL…CALC and LSTT…AQPV.

Belongs to the asfivirus MGF 110 family.

It localises to the host membrane. Plays a role in virus cell tropism, and may be required for efficient virus replication in macrophages. This is Protein MGF 110-13L from African swine fever virus (isolate Tick/Malawi/Lil 20-1/1983) (ASFV).